Here is a 286-residue protein sequence, read N- to C-terminus: Peroxisomal membrane protein pex14 (286 aa).

Positions 61-69 (TSNFVSRDW) match the SH3-binding motif. Residues 122–214 (KILENLDEQT…REISSLRCLQ (93 aa)) are a coiled coil. The interval 218–239 (KKDDTFATTSNSSIPVLENPLD) is disordered.

The protein belongs to the peroxin-14 family. As to quaternary structure, interacts with PEX13 (via SH3 domain); forming the PEX13-PEX14 docking complex. Interacts with PEX5 (via WxxxF/Y motifs).

The protein localises to the peroxisome membrane. Its function is as follows. Component of the PEX13-PEX14 docking complex, a translocon channel that specifically mediates the import of peroxisomal cargo proteins bound to PEX5 receptor. The PEX13-PEX14 docking complex forms a large import pore which can be opened to a diameter of about 9 nm. Mechanistically, PEX5 receptor along with cargo proteins associates with the PEX14 subunit of the PEX13-PEX14 docking complex in the cytosol, leading to the insertion of the receptor into the organelle membrane with the concomitant translocation of the cargo into the peroxisome matrix. This Schizosaccharomyces pombe (strain 972 / ATCC 24843) (Fission yeast) protein is Peroxisomal membrane protein pex14 (pex14).